The sequence spans 344 residues: Meiotic recombination protein DMC1 homolog (344 aa).

A disordered region spans residues 1-22; that stretch reads MMASLKAEETSQMQLVEREEND. Residue 133-140 coordinates ATP; the sequence is GEFRSGKT. Arg-235 lines the dsDNA pocket. SsDNA contacts are provided by Arg-235, Phe-238, Arg-241, Arg-247, and Arg-315. 2 residues coordinate dsDNA: Arg-241 and Arg-247.

The protein belongs to the RecA family. DMC1 subfamily. As to quaternary structure, double stacked ring-shaped homooctamer. Interacts with BRCA2A and BRCA2B. As to expression, expressed in mitotic and/or meiotic tissues. Expressed in roots, leaves and anthers and carpels of young fower buds.

It is found in the nucleus. Its function is as follows. May participate in meiotic recombination, specifically in homologous strand assimilation, which is required for the resolution of meiotic double-strand breaks. Mediates interhomolog recombination during meiosis. The polypeptide is Meiotic recombination protein DMC1 homolog (Arabidopsis thaliana (Mouse-ear cress)).